The primary structure comprises 303 residues: MPHQHKGIDKAKILTEALPYIQRFSGKTLVVKYGGNAMTDPELESSFARDIVLLKTVGLNPIVVHGGGPQVDSLLKRLGQVSDRIDGMRVTDEATMEVVEMVLGGSVNKSIVNLINQHGGRAIGLTGKDGNLIRARKLLMEKHDEQGDIKHIDLGLVGEVVGIKTDVLEMFTQSDFIPVIAPLGVDESGNTYNINADLVAGKVAEALGAEKLILLTNISGVLDENKNLLTGLSTQEVDRLIATGVIYGGMIPKVGCALDAVKGGVVSAHIVDGRVPHATLLEIFTDHGVGTLITNRLHAKSEH.

Substrate-binding positions include 67–68 (GG), Arg-89, and Asn-193.

This sequence belongs to the acetylglutamate kinase family. ArgB subfamily.

It is found in the cytoplasm. It carries out the reaction N-acetyl-L-glutamate + ATP = N-acetyl-L-glutamyl 5-phosphate + ADP. It participates in amino-acid biosynthesis; L-arginine biosynthesis; N(2)-acetyl-L-ornithine from L-glutamate: step 2/4. Functionally, catalyzes the ATP-dependent phosphorylation of N-acetyl-L-glutamate. The polypeptide is Acetylglutamate kinase (Acinetobacter baylyi (strain ATCC 33305 / BD413 / ADP1)).